The primary structure comprises 219 residues: Thiopurine S-methyltransferase (219 aa).

S-adenosyl-L-methionine contacts are provided by Trp-10, Leu-45, Glu-66, and Arg-123.

It belongs to the class I-like SAM-binding methyltransferase superfamily. TPMT family.

Its subcellular location is the cytoplasm. It catalyses the reaction S-adenosyl-L-methionine + a thiopurine = S-adenosyl-L-homocysteine + a thiopurine S-methylether.. In Shewanella pealeana (strain ATCC 700345 / ANG-SQ1), this protein is Thiopurine S-methyltransferase.